The chain runs to 511 residues: Inositol-3-phosphate synthase (511 aa).

24 residues coordinate NAD(+): G70, N71, N72, D143, S179, I180, Q190, R193, S230, A231, N232, T233, G281, S282, D306, T309, N340, N341, D342, K355, G393, D394, D422, and S423.

The protein belongs to the myo-inositol 1-phosphate synthase family. The cofactor is NAD(+).

It is found in the cytoplasm. It catalyses the reaction D-glucose 6-phosphate = 1D-myo-inositol 3-phosphate. It functions in the pathway polyol metabolism; myo-inositol biosynthesis; myo-inositol from D-glucose 6-phosphate: step 1/2. Its function is as follows. Key enzyme in myo-inositol biosynthesis pathway that catalyzes the conversion of glucose 6-phosphate to 1-myo-inositol 1-phosphate in a NAD-dependent manner. Rate-limiting enzyme in the synthesis of all inositol-containing compounds. The protein is Inositol-3-phosphate synthase (ino1) of Dictyostelium discoideum (Social amoeba).